The sequence spans 171 residues: S-ribosylhomocysteine lyase (171 aa).

H54, H58, and C128 together coordinate Fe cation.

It belongs to the LuxS family. As to quaternary structure, homodimer. It depends on Fe cation as a cofactor.

The enzyme catalyses S-(5-deoxy-D-ribos-5-yl)-L-homocysteine = (S)-4,5-dihydroxypentane-2,3-dione + L-homocysteine. Its function is as follows. Involved in the synthesis of autoinducer 2 (AI-2) which is secreted by bacteria and is used to communicate both the cell density and the metabolic potential of the environment. The regulation of gene expression in response to changes in cell density is called quorum sensing. Catalyzes the transformation of S-ribosylhomocysteine (RHC) to homocysteine (HC) and 4,5-dihydroxy-2,3-pentadione (DPD). The protein is S-ribosylhomocysteine lyase of Escherichia coli O157:H7.